We begin with the raw amino-acid sequence, 589 residues long: Sentrin-specific protease 2 (589 aa).

The Nuclear localization signal motif lies at 28–31 (KRRR). S32 bears the Phosphoserine mark. The Nuclear localization signal motif lies at 46–51 (PAKRPR). The disordered stretch occupies residues 155 to 176 (SEGCNRRPGGRRHSKGNPESSL). The Nuclear export signal motif lies at 317-332 (LEPDLSEEVSARLRLG). A phosphoserine mark is found at S333 and S344. Residues 396–560 (RITRGDIQTL…FTCKYADYIS (165 aa)) form a protease region. Catalysis depends on residues H478 and D495. C548 serves as the catalytic Nucleophile.

It belongs to the peptidase C48 family. In terms of assembly, binds to SUMO2 and SUMO3. Interacts with the C-terminal domain of NUP153 via its N-terminus. Interacts with MTA1. In terms of processing, polyubiquitinated; which leads to proteasomal degradation.

The protein localises to the nucleus. It localises to the nuclear pore complex. It is found in the nucleus membrane. The protein resides in the cytoplasm. In terms of biological role, protease that catalyzes two essential functions in the SUMO pathway. The first is the hydrolysis of an alpha-linked peptide bond at the C-terminal end of the small ubiquitin-like modifier (SUMO) propeptides, SUMO1, SUMO2 and SUMO3 leading to the mature form of the proteins. The second is the deconjugation of SUMO1, SUMO2 and SUMO3 from targeted proteins, by cleaving an epsilon-linked peptide bond between the C-terminal glycine of the mature SUMO and the lysine epsilon-amino group of the target protein. May down-regulate CTNNB1 levels and thereby modulate the Wnt pathway. Deconjugates SUMO2 from MTA1. Plays a dynamic role in adipogenesis by desumoylating and promoting the stabilization of CEBPB. Acts as a regulator of the cGAS-STING pathway by catalyzing desumoylation of CGAS and STING1 during the late phase of viral infection. The protein is Sentrin-specific protease 2 of Homo sapiens (Human).